The chain runs to 571 residues: Adenine deaminase (571 aa).

Belongs to the metallo-dependent hydrolases superfamily. Adenine deaminase family. Requires Mn(2+) as cofactor.

The enzyme catalyses adenine + H2O + H(+) = hypoxanthine + NH4(+). This chain is Adenine deaminase, found in Dehalococcoides mccartyi (strain ATCC BAA-2266 / KCTC 15142 / 195) (Dehalococcoides ethenogenes (strain 195)).